Consider the following 240-residue polypeptide: Phosphatidylserine decarboxylase proenzyme (240 aa).

Ser209 serves as the catalytic Schiff-base intermediate with substrate; via pyruvic acid. Ser209 is subject to Pyruvic acid (Ser); by autocatalysis.

It belongs to the phosphatidylserine decarboxylase family. PSD-A subfamily. As to quaternary structure, heterodimer of a large membrane-associated beta subunit and a small pyruvoyl-containing alpha subunit. Requires pyruvate as cofactor. Is synthesized initially as an inactive proenzyme. Formation of the active enzyme involves a self-maturation process in which the active site pyruvoyl group is generated from an internal serine residue via an autocatalytic post-translational modification. Two non-identical subunits are generated from the proenzyme in this reaction, and the pyruvate is formed at the N-terminus of the alpha chain, which is derived from the carboxyl end of the proenzyme. The post-translation cleavage follows an unusual pathway, termed non-hydrolytic serinolysis, in which the side chain hydroxyl group of the serine supplies its oxygen atom to form the C-terminus of the beta chain, while the remainder of the serine residue undergoes an oxidative deamination to produce ammonia and the pyruvoyl prosthetic group on the alpha chain.

It is found in the cell membrane. It catalyses the reaction a 1,2-diacyl-sn-glycero-3-phospho-L-serine + H(+) = a 1,2-diacyl-sn-glycero-3-phosphoethanolamine + CO2. The protein operates within phospholipid metabolism; phosphatidylethanolamine biosynthesis; phosphatidylethanolamine from CDP-diacylglycerol: step 2/2. In terms of biological role, catalyzes the formation of phosphatidylethanolamine (PtdEtn) from phosphatidylserine (PtdSer). The sequence is that of Phosphatidylserine decarboxylase proenzyme from Mycobacterium ulcerans (strain Agy99).